The following is a 70-amino-acid chain: Probable protein transport protein Sec61 subunit gamma (70 aa).

Residues 1 to 33 (MADNADDLFQIPKNFYKEGSHFIKRCVKPDRKE) lie on the Cytoplasmic side of the membrane. A helical membrane pass occupies residues 34 to 62 (FLSISKAVATGFVLMGLIGYIIKLIHIPI). Residues 63–70 (NKVLVGGA) lie on the Extracellular side of the membrane.

This sequence belongs to the SecE/SEC61-gamma family. In terms of assembly, heterotrimeric complex composed of SEC61-alpha, SEC61-beta and SEC61-gamma.

It is found in the endoplasmic reticulum membrane. Functionally, necessary for protein translocation in the endoplasmic reticulum. The sequence is that of Probable protein transport protein Sec61 subunit gamma (sss1) from Schizosaccharomyces pombe (strain 972 / ATCC 24843) (Fission yeast).